We begin with the raw amino-acid sequence, 29 residues long: Dermaseptin-9TR (29 aa).

In terms of tissue distribution, expressed by the skin glands.

The protein resides in the secreted. In terms of biological role, has antimicrobial activity. This Phyllomedusa trinitatis (Trinidad leaf frog) protein is Dermaseptin-9TR.